A 144-amino-acid chain; its full sequence is Urease subunit beta (144 aa).

Belongs to the urease beta subunit family. As to quaternary structure, heterotrimer of UreA (gamma), UreB (beta) and UreC (alpha) subunits. Three heterotrimers associate to form the active enzyme.

The protein resides in the cytoplasm. It catalyses the reaction urea + 2 H2O + H(+) = hydrogencarbonate + 2 NH4(+). It participates in nitrogen metabolism; urea degradation; CO(2) and NH(3) from urea (urease route): step 1/1. The protein is Urease subunit beta of Yersinia pseudotuberculosis serotype O:1b (strain IP 31758).